Reading from the N-terminus, the 479-residue chain is Xylose isomerase (479 aa).

Residue histidine 144 is part of the active site. The Mn(2+) site is built by glutamate 275, glutamate 311, histidine 314, aspartate 339, aspartate 350, aspartate 352, and tyrosine 382.

Belongs to the xylose isomerase family. Homodimer. Requires Mn(2+) as cofactor.

It carries out the reaction alpha-D-xylose = alpha-D-xylulofuranose. The polypeptide is Xylose isomerase (XYLA) (Hordeum vulgare (Barley)).